The following is a 396-amino-acid chain: MQTFVKGKRVGYWLSEKKIKKLNFQTFVDLCRKQGIEMIQLDLSQPIESQGPFDVIIHKLTDHIVDADQNVTESLLLVQGVQDYIDAHPETVILDPLPAIRTLLDRCKSYKLIHKLEHSMEDDRICSPPFMVLKTECGFETLEQLHKHGITFPFICKPQVAHGTNSHEMAIIFSEEDLKDIKPPCVLQSFINHNAVLYKVFVVGEAYSVVQRPSIRNFPSGPTDRRAISFNSHHVSKPESSSHLTCRDNMVGQSWKPSNEVIQKISRKLHQALGISLFGIDIIINNQTGQHAVIDINAFPGYEGVPEFFDDLLSHISSVLQGQVCNGVACGHLRVNGTAQSQTVHCGMLGNDSSWLMDSEGIKKGPHQGLSCCGGCMTPNFHQHTRSSLTAETSSQ.

Position 18 (K18) interacts with 1D-myo-inositol 1,3,4-trisphosphate. Residues R106 and K157 each coordinate ATP. The region spanning 117 to 325 (EHSMEDDRIC…ISSVLQGQVC (209 aa)) is the ATP-grasp domain. 1D-myo-inositol 1,3,4-trisphosphate is bound by residues H167 and K199. Residues 188-199 (QSFINHNAVLYK), S214, S232, and S236 contribute to the ATP site. Residues D281, D295, and N297 each contribute to the Mg(2+) site. Residue N297 coordinates 1D-myo-inositol 1,3,4-trisphosphate.

It belongs to the ITPK1 family. Monomer. The cofactor is Mg(2+).

The catalysed reaction is 1D-myo-inositol 3,4,5,6-tetrakisphosphate + ATP = 1D-myo-inositol 1,3,4,5,6-pentakisphosphate + ADP + H(+). The enzyme catalyses 1D-myo-inositol 1,3,4-trisphosphate + ATP = 1D-myo-inositol 1,3,4,5-tetrakisphosphate + ADP + H(+). It catalyses the reaction 1D-myo-inositol 1,3,4-trisphosphate + ATP = 1D-myo-inositol 1,3,4,6-tetrakisphosphate + ADP + H(+). It carries out the reaction 1D-myo-inositol 3,4,6-trisphosphate + ATP = 1D-myo-inositol 1,3,4,6-tetrakisphosphate + ADP + H(+). The catalysed reaction is 1D-myo-inositol 1,3,4-trisphosphate + 1D-myo-inositol 1,3,4,5,6-pentakisphosphate = 1D-myo-inositol 3,4,5,6-tetrakisphosphate + 1D-myo-inositol 1,3,4,6-tetrakisphosphate. The enzyme catalyses 1D-myo-inositol 1,3,4-trisphosphate + 1D-myo-inositol 1,3,4,5,6-pentakisphosphate = 1D-myo-inositol 3,4,5,6-tetrakisphosphate + 1D-myo-inositol 1,3,4,5-tetrakisphosphate. In terms of biological role, kinase that can phosphorylate various inositol polyphosphate such as Ins(3,4,5,6)P4 or Ins(1,3,4)P3. Phosphorylates Ins(3,4,5,6)P4 at position 1 to form Ins(1,3,4,5,6)P5. This reaction is thought to have regulatory importance, since Ins(3,4,5,6)P4 is an inhibitor of plasma membrane Ca(2+)-activated Cl(-) channels, while Ins(1,3,4,5,6)P5 is not. Also phosphorylates Ins(1,3,4)P3 on O-5 and O-6 to form Ins(1,3,4,6)P4, an essential molecule in the hexakisphosphate (InsP6) pathway. Also acts as an inositol polyphosphate phosphatase that dephosphorylates Ins(1,3,4,5)P4 and Ins(1,3,4,6)P4 to Ins(1,3,4)P3, and Ins(1,3,4,5,6)P5 to Ins(3,4,5,6)P4. May also act as an isomerase that interconverts the inositol tetrakisphosphate isomers Ins(1,3,4,5)P4 and Ins(1,3,4,6)P4 in the presence of ADP and magnesium. Probably acts as the rate-limiting enzyme of the InsP6 pathway. Modifies TNF-alpha-induced apoptosis by interfering with the activation of TNFRSF1A-associated death domain. Plays an important role in MLKL-mediated necroptosis. Produces highly phosphorylated inositol phosphates such as inositolhexakisphosphate (InsP6) which bind to MLKL mediating the release of an N-terminal auto-inhibitory region leading to its activation. Essential for activated phospho-MLKL to oligomerize and localize to the cell membrane during necroptosis. The polypeptide is Inositol-tetrakisphosphate 1-kinase (itpk1) (Danio rerio (Zebrafish)).